A 760-amino-acid chain; its full sequence is Phosphatidylinositol N-acetylglucosaminyltransferase subunit Q (760 aa).

5 helical membrane passes run 278 to 298, 349 to 371, 378 to 400, 446 to 468, and 475 to 497; these read TVAS…WLHG, LYHI…HILW, CLGL…FHIY, LFIG…LYYL, and LLVV…LPLY. Positions 696–748 are disordered; it reads LAVGVEGPCQDEPPSPRHPLAPSAEQHPASGGLKQSLTPVPSGPGPSLPEPHG.

Belongs to the PIGQ family. As to quaternary structure, component of the glycosylphosphatidylinositol-N-acetylglucosaminyltransferase (GPI-GnT) complex composed at least by PIGA, PIGC, PIGH, PIGP, PIGQ, PIGY and DPM2. Interacts with PIGA, PIGH and PIGC.

Its subcellular location is the membrane. Its pathway is glycolipid biosynthesis; glycosylphosphatidylinositol-anchor biosynthesis. Part of the glycosylphosphatidylinositol-N-acetylglucosaminyltransferase (GPI-GnT) complex that catalyzes the transfer of N-acetylglucosamine from UDP-N-acetylglucosamine to phosphatidylinositol and participates in the first step of GPI biosynthesis. This Homo sapiens (Human) protein is Phosphatidylinositol N-acetylglucosaminyltransferase subunit Q.